Here is a 425-residue protein sequence, read N- to C-terminus: Histidine--tRNA ligase (425 aa).

Belongs to the class-II aminoacyl-tRNA synthetase family. As to quaternary structure, homodimer.

The protein localises to the cytoplasm. The catalysed reaction is tRNA(His) + L-histidine + ATP = L-histidyl-tRNA(His) + AMP + diphosphate + H(+). The sequence is that of Histidine--tRNA ligase from Buchnera aphidicola subsp. Baizongia pistaciae (strain Bp).